Here is a 247-residue protein sequence, read N- to C-terminus: Small ribosomal subunit protein uS2 (247 aa).

It belongs to the universal ribosomal protein uS2 family.

The polypeptide is Small ribosomal subunit protein uS2 (Pseudomonas savastanoi pv. phaseolicola (strain 1448A / Race 6) (Pseudomonas syringae pv. phaseolicola (strain 1448A / Race 6))).